The sequence spans 307 residues: tRNA(Met) cytidine acetate ligase (307 aa).

ATP contacts are provided by residues valine 12–glutamine 25, glycine 106, asparagine 163, and arginine 188.

This sequence belongs to the TmcAL family.

The protein localises to the cytoplasm. It carries out the reaction cytidine(34) in elongator tRNA(Met) + acetate + ATP = N(4)-acetylcytidine(34) in elongator tRNA(Met) + AMP + diphosphate. Its function is as follows. Catalyzes the formation of N(4)-acetylcytidine (ac(4)C) at the wobble position of elongator tRNA(Met), using acetate and ATP as substrates. First activates an acetate ion to form acetyladenylate (Ac-AMP) and then transfers the acetyl group to tRNA to form ac(4)C34. The chain is tRNA(Met) cytidine acetate ligase from Mycoplasmopsis synoviae (strain 53) (Mycoplasma synoviae).